The primary structure comprises 283 residues: MNLFEAVILGIVQGLTEFLPISSTAHLRIIPALAGWKDPGAAFTAIVQIGTLAAVLIYFFRDITAIVREVVAGILKGRPLGTTEAKMGWMIAAGTIPIVIFGLLFKNEIETSLRSLYWISGALIGLALLLTIAEKRMKNQLRQGVTMKSMENIGWKDALLIGLIQSIALIPGSSRSGVTITGGLFLNLSRETAARFSFLLSLPSVLAAGVFQLYKSWDLIISSPDNLIAIIVATIVSGIVGYASIAFLLNYLKSHTTSVFIIYRLLLGSGILLMLATGMLPAT.

7 helical membrane passes run Gly-40–Phe-60, Ala-85–Phe-105, Leu-113–Ala-133, Ile-153–Ser-173, Ala-193–Leu-213, Leu-227–Phe-247, and Val-259–Met-279.

The protein belongs to the UppP family.

It is found in the cell inner membrane. The catalysed reaction is di-trans,octa-cis-undecaprenyl diphosphate + H2O = di-trans,octa-cis-undecaprenyl phosphate + phosphate + H(+). Catalyzes the dephosphorylation of undecaprenyl diphosphate (UPP). Confers resistance to bacitracin. The chain is Undecaprenyl-diphosphatase from Chlorobium limicola (strain DSM 245 / NBRC 103803 / 6330).